Reading from the N-terminus, the 304-residue chain is Dihydroorotate dehydrogenase B (NAD(+)), catalytic subunit (304 aa).

FMN contacts are provided by residues S21 and 45–46; that span reads KA. Residues K45 and 69-73 contribute to the substrate site; that span reads NAIGL. N99 and N127 together coordinate FMN. Residue N127 coordinates substrate. The Nucleophile role is filled by C130. Positions 165 and 191 each coordinate FMN. Position 192-193 (192-193) interacts with substrate; that stretch reads NT. Residues G217, 243–244, and 265–266 contribute to the FMN site; these read GG and GT.

Belongs to the dihydroorotate dehydrogenase family. Type 1 subfamily. Heterotetramer of 2 PyrK and 2 PyrD type B subunits. The cofactor is FMN.

It is found in the cytoplasm. The catalysed reaction is (S)-dihydroorotate + NAD(+) = orotate + NADH + H(+). It participates in pyrimidine metabolism; UMP biosynthesis via de novo pathway; orotate from (S)-dihydroorotate (NAD(+) route): step 1/1. Catalyzes the conversion of dihydroorotate to orotate with NAD(+) as electron acceptor. The protein is Dihydroorotate dehydrogenase B (NAD(+)), catalytic subunit (pyrD) of Listeria monocytogenes serotype 4b (strain CLIP80459).